The chain runs to 589 residues: Splicing factor U2af large subunit B (589 aa).

A disordered region spans residues 1–195; the sequence is MMSYEGNGDG…KRRSGFDMAP (195 aa). Residues 14–27 are compositionally biased toward polar residues; the sequence is STENHNENYISLES. 2 stretches are compositionally biased toward basic and acidic residues: residues 29–100 and 109–145; these read PFHE…DRQR and RDRS…DREV. Basic residues-rich tracts occupy residues 146–156 and 164–188; these read RHRRRSRSRSR and RSEH…SKRR. RRM domains lie at 255–338, 375–453, and 494–580; these read RRVY…RPTD, DRIF…RAIQ, and QVVT…YPED.

This sequence belongs to the splicing factor SR family. In terms of assembly, component of the spliceosome. Interacts with SF1 in the nucleus.

It localises to the nucleus. The protein localises to the nucleus speckle. Functionally, necessary for the splicing of pre-mRNA. The chain is Splicing factor U2af large subunit B from Arabidopsis thaliana (Mouse-ear cress).